The chain runs to 369 residues: Molybdenum import ATP-binding protein ModC 1 (369 aa).

The ABC transporter domain maps to K10–A240. An ATP-binding site is contributed by G42–T49. The Mop domain occupies A297–G367.

The protein belongs to the ABC transporter superfamily. Molybdate importer (TC 3.A.1.8) family. In terms of assembly, the complex is composed of two ATP-binding proteins (ModC), two transmembrane proteins (ModB) and a solute-binding protein (ModA).

Its subcellular location is the cell inner membrane. It catalyses the reaction molybdate(out) + ATP + H2O = molybdate(in) + ADP + phosphate + H(+). Functionally, part of the ABC transporter complex ModABC involved in molybdenum import. Responsible for energy coupling to the transport system. The chain is Molybdenum import ATP-binding protein ModC 1 from Bradyrhizobium diazoefficiens (strain JCM 10833 / BCRC 13528 / IAM 13628 / NBRC 14792 / USDA 110).